A 144-amino-acid polypeptide reads, in one-letter code: MKIATKYHGNIDIDEKDIVRFEQGIPGFLEEKQFVLLPLEDTPFIILQSVNTPALGFVLIEPFSYFPTYEIELDDNTLEQLQITGEQDVALYVILTVAEPFDDTTANLQAPIVINVNKRLGKQVILTNTNYKTKHRLFPEKVAK.

This sequence belongs to the FliW family. In terms of assembly, interacts with translational regulator CsrA and flagellin(s).

The protein resides in the cytoplasm. Functionally, acts as an anti-CsrA protein, binds CsrA and prevents it from repressing translation of its target genes, one of which is flagellin. Binds to flagellin and participates in the assembly of the flagellum. This chain is Flagellar assembly factor FliW, found in Geobacillus sp. (strain WCH70).